The chain runs to 138 residues: Basic phospholipase A2 PL-X' (138 aa).

The N-terminal stretch at 1-16 (MRTLWIMAVLLVGVEG) is a signal peptide. Intrachain disulfides connect Cys42-Cys131, Cys44-Cys60, Cys59-Cys111, Cys65-Cys138, Cys66-Cys104, Cys73-Cys97, and Cys91-Cys102. Residues Tyr43, Gly45, and Gly47 each contribute to the Ca(2+) site. The active site involves His63. Ca(2+) is bound at residue Asp64. Asp105 is an active-site residue.

The protein belongs to the phospholipase A2 family. Group II subfamily. D49 sub-subfamily. Ca(2+) serves as cofactor. In terms of tissue distribution, expressed by the venom gland.

It is found in the secreted. The catalysed reaction is a 1,2-diacyl-sn-glycero-3-phosphocholine + H2O = a 1-acyl-sn-glycero-3-phosphocholine + a fatty acid + H(+). Functionally, PLA2 catalyzes the calcium-dependent hydrolysis of the 2-acyl groups in 3-sn-phosphoglycerides. This Protobothrops flavoviridis (Habu) protein is Basic phospholipase A2 PL-X'.